The sequence spans 93 residues: UPF0728 protein C10orf53 homolog (93 aa).

It belongs to the UPF0728 family.

This chain is UPF0728 protein C10orf53 homolog, found in Xenopus tropicalis (Western clawed frog).